The following is a 226-amino-acid chain: Cytidylate kinase (226 aa).

Position 10 to 18 (Gly10 to Thr18) interacts with ATP.

Belongs to the cytidylate kinase family. Type 1 subfamily.

The protein localises to the cytoplasm. It carries out the reaction CMP + ATP = CDP + ADP. The enzyme catalyses dCMP + ATP = dCDP + ADP. The polypeptide is Cytidylate kinase (Streptococcus equi subsp. zooepidemicus (strain MGCS10565)).